The chain runs to 697 residues: Elongation factor G (697 aa).

Residues 8–282 form the tr-type G domain; the sequence is EDYRNIGIMA…AIVDYLPSPL (275 aa). Residues 17-24, 81-85, and 135-138 each bind GTP; these read AHIDAGKT, DTPGH, and NKMD.

Belongs to the TRAFAC class translation factor GTPase superfamily. Classic translation factor GTPase family. EF-G/EF-2 subfamily.

It is found in the cytoplasm. Functionally, catalyzes the GTP-dependent ribosomal translocation step during translation elongation. During this step, the ribosome changes from the pre-translocational (PRE) to the post-translocational (POST) state as the newly formed A-site-bound peptidyl-tRNA and P-site-bound deacylated tRNA move to the P and E sites, respectively. Catalyzes the coordinated movement of the two tRNA molecules, the mRNA and conformational changes in the ribosome. The chain is Elongation factor G from Metamycoplasma arthritidis (strain 158L3-1) (Mycoplasma arthritidis).